We begin with the raw amino-acid sequence, 118 residues long: Late cornified envelope protein 1C (118 aa).

A compositionally biased stretch (low complexity) spans Met-1–Cys-10. 2 disordered regions span residues Met-1–Lys-23 and Cys-87–Cys-118. The segment covering Gln-11–Lys-23 has biased composition (pro residues). Low complexity predominate over residues Pro-90 to Ser-103. The span at Ser-104–Cys-118 shows a compositional bias: gly residues.

The protein belongs to the LCE family. Interacts with CYSRT1. In terms of tissue distribution, skin-specific. Expression was readily detected in adult trunk skin, adult arm skin, fetal skin, penal skin, vulva, esophagus and tongue. Not expressed in the cervix, rectum, lung, colon, or placenta.

In terms of biological role, precursors of the cornified envelope of the stratum corneum. This Homo sapiens (Human) protein is Late cornified envelope protein 1C (LCE1C).